The sequence spans 188 residues: Transmembrane protein 160 (188 aa).

Residues 1-96 constitute a mitochondrion transit peptide; the sequence is MGGGWWWARA…ISFMQSDMGR (96 aa). Residues 24 to 52 form a disordered region; it reads PPQRPRSGGARGSFAPGHGPRAGASPPPV. S48 bears the Phosphoserine mark. The next 2 membrane-spanning stretches (helical) occupy residues 102–122 and 135–155; these read FFLLGGLCVVWGSASYAVGLA and AAVGAGAVLAASLLWACAVGL. Residues 168-188 form a disordered region; that stretch reads PEDDGTASAEGPDEAGRPPPE.

Belongs to the TMEM160 family.

It is found in the mitochondrion inner membrane. The protein is Transmembrane protein 160 of Homo sapiens (Human).